The sequence spans 273 residues: Dermonecrotic toxin LdSicTox-alphaIB1av (273 aa).

His5 is an active-site residue. Mg(2+) is bound by residues Glu25 and Asp27. His41 acts as the Nucleophile in catalysis. 2 disulfides stabilise this stretch: Cys45–Cys51 and Cys47–Cys190. Asp85 is a binding site for Mg(2+). The N-linked (GlcNAc...) asparagine glycan is linked to Asn250.

Belongs to the arthropod phospholipase D family. Class II subfamily. Mg(2+) serves as cofactor. Expressed by the venom gland.

It is found in the secreted. It catalyses the reaction an N-(acyl)-sphingosylphosphocholine = an N-(acyl)-sphingosyl-1,3-cyclic phosphate + choline. It carries out the reaction an N-(acyl)-sphingosylphosphoethanolamine = an N-(acyl)-sphingosyl-1,3-cyclic phosphate + ethanolamine. The enzyme catalyses a 1-acyl-sn-glycero-3-phosphocholine = a 1-acyl-sn-glycero-2,3-cyclic phosphate + choline. The catalysed reaction is a 1-acyl-sn-glycero-3-phosphoethanolamine = a 1-acyl-sn-glycero-2,3-cyclic phosphate + ethanolamine. Its function is as follows. Dermonecrotic toxins cleave the phosphodiester linkage between the phosphate and headgroup of certain phospholipids (sphingolipid and lysolipid substrates), forming an alcohol (often choline) and a cyclic phosphate. This toxin acts on sphingomyelin (SM). It may also act on ceramide phosphoethanolamine (CPE), lysophosphatidylcholine (LPC) and lysophosphatidylethanolamine (LPE), but not on lysophosphatidylserine (LPS), and lysophosphatidylglycerol (LPG). It acts by transphosphatidylation, releasing exclusively cyclic phosphate products as second products. Induces dermonecrosis, hemolysis, increased vascular permeability, edema, inflammatory response, and platelet aggregation. The polypeptide is Dermonecrotic toxin LdSicTox-alphaIB1av (Loxosceles deserta (Desert recluse spider)).